The sequence spans 122 residues: Large ribosomal subunit protein uL14 (122 aa).

The protein belongs to the universal ribosomal protein uL14 family. Part of the 50S ribosomal subunit. Forms a cluster with proteins L3 and L19. In the 70S ribosome, L14 and L19 interact and together make contacts with the 16S rRNA in bridges B5 and B8.

In terms of biological role, binds to 23S rRNA. Forms part of two intersubunit bridges in the 70S ribosome. This Malacoplasma penetrans (strain HF-2) (Mycoplasma penetrans) protein is Large ribosomal subunit protein uL14.